A 218-amino-acid polypeptide reads, in one-letter code: Probable transaldolase (218 aa).

K87 (schiff-base intermediate with substrate) is an active-site residue.

It belongs to the transaldolase family. Type 3B subfamily.

Its subcellular location is the cytoplasm. It catalyses the reaction D-sedoheptulose 7-phosphate + D-glyceraldehyde 3-phosphate = D-erythrose 4-phosphate + beta-D-fructose 6-phosphate. It functions in the pathway carbohydrate degradation; pentose phosphate pathway; D-glyceraldehyde 3-phosphate and beta-D-fructose 6-phosphate from D-ribose 5-phosphate and D-xylulose 5-phosphate (non-oxidative stage): step 2/3. In terms of biological role, transaldolase is important for the balance of metabolites in the pentose-phosphate pathway. The sequence is that of Probable transaldolase from Bacteroides thetaiotaomicron (strain ATCC 29148 / DSM 2079 / JCM 5827 / CCUG 10774 / NCTC 10582 / VPI-5482 / E50).